The following is a 446-amino-acid chain: Eukaryotic translation initiation factor 2 subunit gamma (446 aa).

Residues 21–227 enclose the tr-type G domain; sequence QATINIGTIG…YIVKKIPIPV (207 aa). Residues 30-37 form a G1 region; that stretch reads GHVAHGKS. A GTP-binding site is contributed by 33-38; it reads AHGKST. Residues 58–62 are G2; it reads NITIK. Residues 114–117 are G3; that stretch reads DCPG. Residues 170-173 and 205-207 each bind GTP; these read NKVD and SAQ. The segment at 170–173 is G4; sequence NKVD. The segment at 205–207 is G5; sequence SAQ. Residues 436–446 are interacts with cdc123; that stretch reads AKVVEGKTLKV.

This sequence belongs to the TRAFAC class translation factor GTPase superfamily. Classic translation factor GTPase family. EIF2G subfamily. As to quaternary structure, eukaryotic translation initiation factor 2 eIF2 is a heterotrimeric complex composed of an alpha, a beta and a gamma subunit. The factors eIF-1, eIF-2, eIF-3, TIF5/eIF-5 and methionyl-tRNAi form a multifactor complex (MFC) that may bind to the 40S ribosome. Interacts with cdc123; the interaction is direct.

Its subcellular location is the cytoplasm. It is found in the cytosol. The enzyme catalyses GTP + H2O = GDP + phosphate + H(+). In terms of biological role, as a subunit of eukaryotic initiation factor 2 eIF2, involved in the early steps of protein synthesis. In the presence of GTP, eIF-2 forms a ternary complex with initiator tRNA Met-tRNAi and then recruits the 40S ribosomal complex and initiation factors eIF-1, eIF-1A and eIF-3 to form the 43S pre-initiation complex (43S PIC), a step that determines the rate of protein translation. The 43S PIC binds to mRNA and scans downstream to the initiation codon, where it forms a 48S initiation complex by codon-anticodon base pairing. This leads to the displacement of eIF-1 to allow GTPase-activating protein (GAP) eIF-5-mediated hydrolysis of eIF2-bound GTP. Hydrolysis of GTP and release of Pi, which makes GTP hydrolysis irreversible, causes the release of the eIF-2-GDP binary complex from the 40S subunit, an event that is essential for the subsequent joining of the 60S ribosomal subunit to form an elongation-competent 80S ribosome. In order for eIF-2 to recycle and catalyze another round of initiation, the GDP bound to eIF-2 must be exchanged with GTP by way of a reaction catalyzed by GDP-GTP exchange factor (GEF) eIF-2B. This Schizosaccharomyces pombe (strain 972 / ATCC 24843) (Fission yeast) protein is Eukaryotic translation initiation factor 2 subunit gamma (tif213).